The sequence spans 61 residues: Small ribosomal subunit protein uS14 (61 aa).

The Zn(2+) site is built by Cys-24, Cys-27, Cys-40, and Cys-43.

It belongs to the universal ribosomal protein uS14 family. Zinc-binding uS14 subfamily. As to quaternary structure, part of the 30S ribosomal subunit. Contacts proteins S3 and S10. Zn(2+) serves as cofactor.

Binds 16S rRNA, required for the assembly of 30S particles and may also be responsible for determining the conformation of the 16S rRNA at the A site. This is Small ribosomal subunit protein uS14 from Rubrobacter xylanophilus (strain DSM 9941 / JCM 11954 / NBRC 16129 / PRD-1).